Here is a 276-residue protein sequence, read N- to C-terminus: MRLYRDRAVVLRQHKLGEADRIVTLLTRDHGLVRAVAKGVRRTRSKFGARLEPFAHIDVQLHPGRNLDIVTQVQAIDAFASDIVSDYGRYTSACAVLETAERLAGEERAPMPALHRLTVGALRAVADGSRPRELVLDAYLLRAMGIAGWAPALTECARCATPGPHRAFHVAAGGSVCVHCRPSGSVTPPQAVLDLMSALHDGDWPAAEASTPSHRSQASGLVAAHLQWHLERQLRTLPLVERVYRVDHAVADHRISLLRQDVHRGDEPGDQLAAGS.

This sequence belongs to the RecO family.

In terms of biological role, involved in DNA repair and RecF pathway recombination. The sequence is that of DNA repair protein RecO from Mycobacterium sp. (strain JLS).